The primary structure comprises 209 residues: Ribosomal RNA large subunit methyltransferase E (209 aa).

S-adenosyl-L-methionine is bound by residues glycine 60, tryptophan 62, aspartate 80, aspartate 96, and aspartate 121. The active-site Proton acceptor is lysine 161. Residues 182 to 196 (VQMRKPSSSRDRSRE) are compositionally biased toward basic and acidic residues. The interval 182–209 (VQMRKPSSSRDRSREQYLLGRGFRGRSE) is disordered.

This sequence belongs to the class I-like SAM-binding methyltransferase superfamily. RNA methyltransferase RlmE family.

It is found in the cytoplasm. The catalysed reaction is uridine(2552) in 23S rRNA + S-adenosyl-L-methionine = 2'-O-methyluridine(2552) in 23S rRNA + S-adenosyl-L-homocysteine + H(+). In terms of biological role, specifically methylates the uridine in position 2552 of 23S rRNA at the 2'-O position of the ribose in the fully assembled 50S ribosomal subunit. This Pseudomonas fluorescens (strain ATCC BAA-477 / NRRL B-23932 / Pf-5) protein is Ribosomal RNA large subunit methyltransferase E.